Here is a 126-residue protein sequence, read N- to C-terminus: Small ribosomal subunit protein uS13 (126 aa).

A disordered region spans residues 98–126 (PLRGQSTKNNARTRKGKKKTVANKKKATK). Residues 108–126 (ARTRKGKKKTVANKKKATK) show a composition bias toward basic residues.

It belongs to the universal ribosomal protein uS13 family. Part of the 30S ribosomal subunit. Forms a loose heterodimer with protein S19. Forms two bridges to the 50S subunit in the 70S ribosome.

In terms of biological role, located at the top of the head of the 30S subunit, it contacts several helices of the 16S rRNA. In the 70S ribosome it contacts the 23S rRNA (bridge B1a) and protein L5 of the 50S subunit (bridge B1b), connecting the 2 subunits; these bridges are implicated in subunit movement. Contacts the tRNAs in the A and P-sites. The polypeptide is Small ribosomal subunit protein uS13 (Parabacteroides distasonis (strain ATCC 8503 / DSM 20701 / CIP 104284 / JCM 5825 / NCTC 11152)).